Here is a 369-residue protein sequence, read N- to C-terminus: Transmembrane protein adipocyte-associated 1 (369 aa).

An N-linked (GlcNAc...) asparagine glycan is attached at N20. 7 helical membrane passes run 45-65 (LLLL…LPLA), 73-93 (SSPI…VGIA), 120-140 (FFLL…GHLE), 148-168 (VLAI…TLEI), 189-209 (QFWL…VILP), 237-257 (LLQG…LCCV), and 262-282 (FLYF…GFFG). N329 carries N-linked (GlcNAc...) asparagine glycosylation.

This sequence belongs to the UPF0359 family. In terms of tissue distribution, ubiquitous, with higher levels in heart, brain, lung, liver and kidney.

The protein resides in the membrane. The protein is Transmembrane protein adipocyte-associated 1 (Tpra1) of Mus musculus (Mouse).